A 764-amino-acid polypeptide reads, in one-letter code: Probable glutamate--tRNA ligase, cytoplasmic (764 aa).

Residue Arg228–Pro230 coordinates L-glutamate. The 'HIGH' region motif lies at Pro233–Cys242. His238 contacts ATP. Residues Asp264, Tyr404–Cys408, and Arg422 each bind L-glutamate. ATP contacts are provided by residues Glu425 and Leu460–Arg464. Positions Leu460 to Arg464 match the 'KMSKS' region motif.

Belongs to the class-I aminoacyl-tRNA synthetase family. Glutamate--tRNA ligase type 2 subfamily.

It localises to the cytoplasm. The enzyme catalyses tRNA(Glu) + L-glutamate + ATP = L-glutamyl-tRNA(Glu) + AMP + diphosphate. Functionally, catalyzes the attachment of glutamate to tRNA(Glu) in a two-step reaction: glutamate is first activated by ATP to form Glu-AMP and then transferred to the acceptor end of tRNA(Glu). The polypeptide is Probable glutamate--tRNA ligase, cytoplasmic (gluS) (Dictyostelium discoideum (Social amoeba)).